The following is a 70-amino-acid chain: Exodeoxyribonuclease 7 small subunit (70 aa).

It belongs to the XseB family. In terms of assembly, heterooligomer composed of large and small subunits.

It is found in the cytoplasm. The catalysed reaction is Exonucleolytic cleavage in either 5'- to 3'- or 3'- to 5'-direction to yield nucleoside 5'-phosphates.. Bidirectionally degrades single-stranded DNA into large acid-insoluble oligonucleotides, which are then degraded further into small acid-soluble oligonucleotides. The sequence is that of Exodeoxyribonuclease 7 small subunit from Streptococcus gordonii (strain Challis / ATCC 35105 / BCRC 15272 / CH1 / DL1 / V288).